A 361-amino-acid polypeptide reads, in one-letter code: Peptide chain release factor 1 (361 aa).

At Gln235 the chain carries N5-methylglutamine.

Belongs to the prokaryotic/mitochondrial release factor family. Post-translationally, methylated by PrmC. Methylation increases the termination efficiency of RF1.

It localises to the cytoplasm. Its function is as follows. Peptide chain release factor 1 directs the termination of translation in response to the peptide chain termination codons UAG and UAA. This chain is Peptide chain release factor 1, found in Xanthomonas oryzae pv. oryzae (strain MAFF 311018).